The sequence spans 80 residues: SPbeta prophage-derived thioredoxin-like protein YosR (80 aa).

The 80-residue stretch at 1–80 (MRLIKLEQPN…ELDELLKELR (80 aa)) folds into the Thioredoxin domain. A disulfide bond links Cys-11 and Cys-14.

This sequence belongs to the thioredoxin family.

This Bacillus subtilis (strain 168) protein is SPbeta prophage-derived thioredoxin-like protein YosR (yosR).